The following is a 231-amino-acid chain: uncharacterized protein (231 aa).

In terms of domain architecture, RCK N-terminal spans 3–119 (RADFCIIGLG…RTMGIREALI (117 aa)). In terms of domain architecture, RCK C-terminal spans 134–221 (HGMETEIINL…VNQYLRYINP (88 aa)).

This is an uncharacterized protein from Mycoplasma pneumoniae (strain ATCC 29342 / M129 / Subtype 1) (Mycoplasmoides pneumoniae).